The sequence spans 283 residues: Thymidylate synthase (283 aa).

A dUMP-binding site is contributed by arginine 22. The active-site Nucleophile is the cysteine 160. Residues 180 to 183 (RSCD), asparagine 191, and 221 to 223 (HIY) each bind dUMP. Aspartate 183 provides a ligand contact to (6R)-5,10-methylene-5,6,7,8-tetrahydrofolate. Serine 282 lines the (6R)-5,10-methylene-5,6,7,8-tetrahydrofolate pocket.

This sequence belongs to the thymidylate synthase family. Bacterial-type ThyA subfamily. As to quaternary structure, homodimer.

It is found in the cytoplasm. It carries out the reaction dUMP + (6R)-5,10-methylene-5,6,7,8-tetrahydrofolate = 7,8-dihydrofolate + dTMP. It functions in the pathway pyrimidine metabolism; dTTP biosynthesis. In terms of biological role, catalyzes the reductive methylation of 2'-deoxyuridine-5'-monophosphate (dUMP) to 2'-deoxythymidine-5'-monophosphate (dTMP) while utilizing 5,10-methylenetetrahydrofolate (mTHF) as the methyl donor and reductant in the reaction, yielding dihydrofolate (DHF) as a by-product. This enzymatic reaction provides an intracellular de novo source of dTMP, an essential precursor for DNA biosynthesis. This is Thymidylate synthase from Pasteurella multocida (strain Pm70).